The primary structure comprises 76 residues: Heat shock factor-binding protein 1 (76 aa).

Belongs to the HSBP1 family. As to quaternary structure, homohexamer. Associates with heptad repeats of HSF1 trimers and probably also HSF1 monomers, and with HSP70. Association with HSF1 trimers and HSP70 coincides with attenuation of heat shock response and the conversion of HSF1 trimer to monomer.

Its subcellular location is the nucleus. In terms of biological role, negative regulator of the heat shock response. Negatively affects HSF1 DNA-binding activity. May have a role in the suppression of the activation of the stress response during the aging process. This chain is Heat shock factor-binding protein 1 (HSBP1), found in Homo sapiens (Human).